We begin with the raw amino-acid sequence, 232 residues long: Uridylate kinase (232 aa).

ATP is bound at residue 13–14 (GS). G52 is a UMP binding site. G53 and R57 together coordinate ATP. Residues D74 and 122 to 128 (LQPGQST) each bind UMP. ATP contacts are provided by T147, Y153, and D156.

Belongs to the UMP kinase family. Homohexamer.

It is found in the cytoplasm. The catalysed reaction is UMP + ATP = UDP + ADP. Its pathway is pyrimidine metabolism; CTP biosynthesis via de novo pathway; UDP from UMP (UMPK route): step 1/1. Its activity is regulated as follows. Inhibited by UTP. Catalyzes the reversible phosphorylation of UMP to UDP. The chain is Uridylate kinase from Thermofilum pendens (strain DSM 2475 / Hrk 5).